The chain runs to 247 residues: Adenosylcobinamide-GDP ribazoletransferase (247 aa).

Transmembrane regions (helical) follow at residues 34–54 (IVMFPFIGLILGGVSGLIFIL), 59–79 (CGIPLAALFCILALALLTGGF), 113–133 (GGLALIFVLLAKILVVSELAL), 138–158 (MLAALAAACAAGRGSAVLLMY), and 187–207 (LAVIVATVLLPGMQGLAAMVV).

Belongs to the CobS family. It depends on Mg(2+) as a cofactor.

The protein resides in the cell inner membrane. It carries out the reaction alpha-ribazole + adenosylcob(III)inamide-GDP = adenosylcob(III)alamin + GMP + H(+). The catalysed reaction is alpha-ribazole 5'-phosphate + adenosylcob(III)inamide-GDP = adenosylcob(III)alamin 5'-phosphate + GMP + H(+). It functions in the pathway cofactor biosynthesis; adenosylcobalamin biosynthesis; adenosylcobalamin from cob(II)yrinate a,c-diamide: step 7/7. In terms of biological role, joins adenosylcobinamide-GDP and alpha-ribazole to generate adenosylcobalamin (Ado-cobalamin). Also synthesizes adenosylcobalamin 5'-phosphate from adenosylcobinamide-GDP and alpha-ribazole 5'-phosphate. In Salmonella dublin (strain CT_02021853), this protein is Adenosylcobinamide-GDP ribazoletransferase.